A 214-amino-acid polypeptide reads, in one-letter code: Probable GTP-binding protein EngB (214 aa).

In terms of domain architecture, EngB-type G spans Glu25–Leu203. GTP contacts are provided by residues Gly33–Ser40, Gly60–Leu64, Asp80–Gly83, Thr147–Asp150, and Phe182–Ser184. Mg(2+) contacts are provided by Ser40 and Thr62.

Belongs to the TRAFAC class TrmE-Era-EngA-EngB-Septin-like GTPase superfamily. EngB GTPase family. Mg(2+) serves as cofactor.

Functionally, necessary for normal cell division and for the maintenance of normal septation. This chain is Probable GTP-binding protein EngB, found in Teredinibacter turnerae (strain ATCC 39867 / T7901).